Here is a 154-residue protein sequence, read N- to C-terminus: Urease accessory protein UreE (154 aa).

It belongs to the UreE family.

Its subcellular location is the cytoplasm. Its function is as follows. Involved in urease metallocenter assembly. Binds nickel. Probably functions as a nickel donor during metallocenter assembly. The protein is Urease accessory protein UreE of Rhizobium meliloti (strain 1021) (Ensifer meliloti).